A 282-amino-acid chain; its full sequence is 4-hydroxy-tetrahydrodipicolinate reductase (282 aa).

Residues 14 to 19 (GAMGRM) and 115 to 117 (GTT) contribute to the NAD(+) site. His-171 functions as the Proton donor/acceptor in the catalytic mechanism. His-172 is a (S)-2,3,4,5-tetrahydrodipicolinate binding site. Lys-175 serves as the catalytic Proton donor. Residue 181–182 (GT) coordinates (S)-2,3,4,5-tetrahydrodipicolinate.

This sequence belongs to the DapB family.

The protein resides in the cytoplasm. It carries out the reaction (S)-2,3,4,5-tetrahydrodipicolinate + NAD(+) + H2O = (2S,4S)-4-hydroxy-2,3,4,5-tetrahydrodipicolinate + NADH + H(+). It catalyses the reaction (S)-2,3,4,5-tetrahydrodipicolinate + NADP(+) + H2O = (2S,4S)-4-hydroxy-2,3,4,5-tetrahydrodipicolinate + NADPH + H(+). The protein operates within amino-acid biosynthesis; L-lysine biosynthesis via DAP pathway; (S)-tetrahydrodipicolinate from L-aspartate: step 4/4. In terms of biological role, catalyzes the conversion of 4-hydroxy-tetrahydrodipicolinate (HTPA) to tetrahydrodipicolinate. This is 4-hydroxy-tetrahydrodipicolinate reductase from Prochlorococcus marinus (strain NATL2A).